We begin with the raw amino-acid sequence, 251 residues long: Low molecular mass lipoprotein PBMHPC-21 (251 aa).

The N-terminal stretch at 1–16 (MKFVVVFASCVLAVSA) is a signal peptide.

Belongs to the 30 kDa lipoprotein family.

It is found in the secreted. The sequence is that of Low molecular mass lipoprotein PBMHPC-21 from Bombyx mori (Silk moth).